The following is a 456-amino-acid chain: Glutamate--tRNA ligase 2 (456 aa).

A 'HIGH' region motif is present at residues 8-18 (PSPTGYIHIGN). Residues 249–253 (GLSKR) carry the 'KMSKS' region motif. K252 contacts ATP.

This sequence belongs to the class-I aminoacyl-tRNA synthetase family. Glutamate--tRNA ligase type 1 subfamily. Monomer.

The protein resides in the cytoplasm. The enzyme catalyses tRNA(Glu) + L-glutamate + ATP = L-glutamyl-tRNA(Glu) + AMP + diphosphate. Its function is as follows. Catalyzes the attachment of glutamate to tRNA(Glu) in a two-step reaction: glutamate is first activated by ATP to form Glu-AMP and then transferred to the acceptor end of tRNA(Glu). In Bartonella bacilliformis (strain ATCC 35685 / KC583 / Herrer 020/F12,63), this protein is Glutamate--tRNA ligase 2.